Here is a 271-residue protein sequence, read N- to C-terminus: Formamidopyrimidine-DNA glycosylase (271 aa).

Catalysis depends on P2, which acts as the Schiff-base intermediate with DNA. Catalysis depends on E3, which acts as the Proton donor. K58 acts as the Proton donor; for beta-elimination activity in catalysis. DNA-binding residues include H91, R110, and R152. Residues 237–271 (LVYGREGQPCVHCGRPIRCETIGQRSSYFCTRCQR) form an FPG-type zinc finger. R261 serves as the catalytic Proton donor; for delta-elimination activity.

Belongs to the FPG family. In terms of assembly, monomer. Zn(2+) serves as cofactor.

It catalyses the reaction Hydrolysis of DNA containing ring-opened 7-methylguanine residues, releasing 2,6-diamino-4-hydroxy-5-(N-methyl)formamidopyrimidine.. The enzyme catalyses 2'-deoxyribonucleotide-(2'-deoxyribose 5'-phosphate)-2'-deoxyribonucleotide-DNA = a 3'-end 2'-deoxyribonucleotide-(2,3-dehydro-2,3-deoxyribose 5'-phosphate)-DNA + a 5'-end 5'-phospho-2'-deoxyribonucleoside-DNA + H(+). Its function is as follows. Involved in base excision repair of DNA damaged by oxidation or by mutagenic agents. Acts as a DNA glycosylase that recognizes and removes damaged bases. Has a preference for oxidized purines, such as 7,8-dihydro-8-oxoguanine (8-oxoG). Has AP (apurinic/apyrimidinic) lyase activity and introduces nicks in the DNA strand. Cleaves the DNA backbone by beta-delta elimination to generate a single-strand break at the site of the removed base with both 3'- and 5'-phosphates. This Syntrophotalea carbinolica (strain DSM 2380 / NBRC 103641 / GraBd1) (Pelobacter carbinolicus) protein is Formamidopyrimidine-DNA glycosylase.